The following is a 328-amino-acid chain: Malate dehydrogenase (328 aa).

16-22 (GAAGQIS) contributes to the NAD(+) binding site. Residues R97 and R103 each contribute to the substrate site. NAD(+)-binding positions include N110, Q117, and 134–136 (VGN). Residues N136 and R167 each coordinate substrate. H192 (proton acceptor) is an active-site residue.

The protein belongs to the LDH/MDH superfamily. MDH type 2 family. Homotetramer.

The enzyme catalyses (S)-malate + NAD(+) = oxaloacetate + NADH + H(+). Its activity is regulated as follows. Citrate activates the enzyme in the oxidation of malate to oxaloacetate and inhibits it in the reverse reaction. Functionally, catalyzes the reversible oxidation of malate to oxaloacetate. Exhibits higher catalytic efficiency for oxaloacetate reduction than for malate oxidation in vitro. Almost equally active both for NADH and NADPH on the bases of the kcat values at pH 6.5, but catalytic efficiency for oxaloacetate reduction is 50-fold higher with NADH. The polypeptide is Malate dehydrogenase (Corynebacterium glutamicum (strain ATCC 13032 / DSM 20300 / JCM 1318 / BCRC 11384 / CCUG 27702 / LMG 3730 / NBRC 12168 / NCIMB 10025 / NRRL B-2784 / 534)).